Reading from the N-terminus, the 260-residue chain is Snake venom serine protease homolog 1 (260 aa).

Positions M1–A18 are cleaved as a signal peptide. Positions Q19–L24 are excised as a propeptide. Residues I25–A251 form the Peptidase S1 domain. Cystine bridges form between C31/C165, C52/C68, C100/C258, C144/C212, C176/C191, and C202/C227. N83, N123, and N124 each carry an N-linked (GlcNAc...) asparagine glycan.

Belongs to the peptidase S1 family. Snake venom subfamily. As to expression, expressed by the venom gland.

It localises to the secreted. Functionally, snake venom serine protease homolog that may act in the hemostasis system of the prey. This Trimeresurus stejnegeri (Chinese green tree viper) protein is Snake venom serine protease homolog 1.